The following is a 265-amino-acid chain: HTH-type transcriptional activator CfaD (265 aa).

The HTH araC/xylS-type domain maps to 164–261 (DKVRNVIEKD…GVTPKQFFTY (98 aa)). DNA-binding regions (H-T-H motif) lie at residues 181–202 (GIIA…ESEN) and 228–251 (ISQI…NKHY).

Homodimer.

Its function is as follows. Transcriptional activator of the CFA/I adhesin (cfaA and cfaB) genes of enterotoxigenic E.coli at 37 degrees Celsius. Also represses the silencing effect of H-NS (hns). The sequence is that of HTH-type transcriptional activator CfaD from Escherichia coli.